Reading from the N-terminus, the 227-residue chain is LexA repressor (227 aa).

The segment at residues 26-46 (FDEMKEALDLASKSGIHRLIT) is a DNA-binding region (H-T-H motif). Catalysis depends on for autocatalytic cleavage activity residues Ser147 and Lys185.

Belongs to the peptidase S24 family. Homodimer.

The enzyme catalyses Hydrolysis of Ala-|-Gly bond in repressor LexA.. Its function is as follows. Represses a number of genes involved in the response to DNA damage (SOS response), including recA and lexA. In the presence of single-stranded DNA, RecA interacts with LexA causing an autocatalytic cleavage which disrupts the DNA-binding part of LexA, leading to derepression of the SOS regulon and eventually DNA repair. This Hyphomonas neptunium (strain ATCC 15444) protein is LexA repressor.